Here is a 93-residue protein sequence, read N- to C-terminus: Small ribosomal subunit protein uS19 (93 aa).

It belongs to the universal ribosomal protein uS19 family.

In terms of biological role, protein S19 forms a complex with S13 that binds strongly to the 16S ribosomal RNA. This chain is Small ribosomal subunit protein uS19, found in Brevibacillus brevis (strain 47 / JCM 6285 / NBRC 100599).